The primary structure comprises 604 residues: Ectonucleoside triphosphate diphosphohydrolase 7 (604 aa).

Topologically, residues 1–28 (MARISFSYLCPASWYFTVPTVSPFLRQR) are cytoplasmic. A helical transmembrane segment spans residues 29–49 (VAFLGLFFISCLLLLMLIIDF). The Vesicular segment spans residues 50–546 (RHWSASLPRD…QAHGSWFRLS (497 aa)). Residue Glu217 is the Proton acceptor of the active site. An N-linked (GlcNAc...) asparagine glycan is attached at Asn330. The cysteines at positions 448 and 477 are disulfide-linked. Residues 547-567 (FVYNHYLFFACILVVLLAIVL) traverse the membrane as a helical segment. At 568–604 (YLLRLRRIHHRQTRASAPLDLLWLEEVVPMMGVQVGP) the chain is on the cytoplasmic side.

Belongs to the GDA1/CD39 NTPase family. Ca(2+) is required as a cofactor. It depends on Mg(2+) as a cofactor.

The protein localises to the cytoplasmic vesicle membrane. It catalyses the reaction a ribonucleoside 5'-triphosphate + H2O = a ribonucleoside 5'-diphosphate + phosphate + H(+). It carries out the reaction UTP + H2O = UDP + phosphate + H(+). The enzyme catalyses GTP + H2O = GDP + phosphate + H(+). The catalysed reaction is CTP + H2O = CDP + phosphate + H(+). Its function is as follows. Catalyzes the hydrolysis of nucleoside triphosphates and diphosphates in a calcium- or magnesium-dependent manner. Preferentially hydrolyzes nucleoside 5'-triphosphates, with substrate preference for UTP &gt; GTP &gt; CTP. Hydrolyzes ATP and nucleoside diphosphates only to a minor extent. This Pongo abelii (Sumatran orangutan) protein is Ectonucleoside triphosphate diphosphohydrolase 7 (ENTPD7).